Consider the following 620-residue polypeptide: MFGRDPWGGPLEISNADSATDDDRSRDLDRGALMRQLDETQQSWLLAGPGDQAGKKKKKYVDLGCMVLDRKIFMWTVGTILGVGLFIGFVMMIVKLVPHKRPPPPPPDQYTQALHKALMFFNAQRSGPLPKHNGVSWRGNSCMKDGLSDSTVRKSLVGGFYDAGDAIKFNYPMAWSMTMLSWSVIEYKAKYEAIGELDHVKELIKWGTDYLLKTFNSSADTIDRIVAQVGVGDTSKGGAQPNDHYCWMRPEDIDYPRPVTECHSCSDLASEMAAALAAASIVFKDSKTYSDKLVRGAKALYKFGRLQRGRYSPNGSDQAIFYNSTSYWDEFVWGGAWMYFATGNNTYLSVATAPGMAKHAGAYWLDSPNYGVFTWDDKLPGAQVLLSRLRLFLSPGYPYEEILRTFHNQTDNVMCSYLPMYNSFNFTKGGMIQLNHGRPQPLQYVVNAAFLASLYSDYLDAADTPGWYCGPTFYTTEVLRKFARSQLDYVLGKNPLKMSYVVGFGNKYPKRAHHRGASIPHNGVKYGCKGGFKWRETKKPNPNILIGALVAGPDRHDGFKDVRTNYNYTEPTLAANAGLVAALISLTNIHVKSGIDKNTIFSAVPPMFPTPPPPPSAWKP.

Residues 1-26 form a disordered region; the sequence is MFGRDPWGGPLEISNADSATDDDRSR. The helical; Signal-anchor for type II membrane protein transmembrane segment at 72 to 92 threads the bilayer; it reads IFMWTVGTILGVGLFIGFVMM. Residue Asp-165 is the Nucleophile of the active site. Asn-216, Asn-314, Asn-323, Asn-344, Asn-408, and Asn-425 each carry an N-linked (GlcNAc...) asparagine glycan. Residues His-513 and Asp-561 contribute to the active site. The N-linked (GlcNAc...) asparagine glycan is linked to Asn-567. Glu-570 is an active-site residue.

It belongs to the glycosyl hydrolase 9 (cellulase E) family. As to expression, ubiquitous.

Its subcellular location is the membrane. The catalysed reaction is Endohydrolysis of (1-&gt;4)-beta-D-glucosidic linkages in cellulose, lichenin and cereal beta-D-glucans.. In Oryza sativa subsp. japonica (Rice), this protein is Endoglucanase 10 (GLU2).